A 529-amino-acid chain; its full sequence is uncharacterized protein (529 aa).

The tract at residues 1–20 is disordered; the sequence is MGADLKQPQDADSPPKGVSR. Residues 1–52 constitute a signal peptide (tat-type signal); sequence MGADLKQPQDADSPPKGVSRRRFLTTGAAAVVGTGVGAGGTALLSSHPRGPA.

In terms of processing, predicted to be exported by the Tat system. The position of the signal peptide cleavage has not been experimentally proven.

This is an uncharacterized protein from Mycobacterium tuberculosis (strain CDC 1551 / Oshkosh).